A 593-amino-acid polypeptide reads, in one-letter code: Salivary alpha-glucosidase (593 aa).

Residues 1 to 19 (MPPLGVLLLLVALGHSTQG) form the signal peptide. Residues aspartate 49, aspartate 51, aspartate 53, isoleucine 55, aspartate 57, and asparagine 130 each contribute to the Ca(2+) site. N-linked (GlcNAc...) asparagine glycans are attached at residues asparagine 130 and asparagine 163. Ca(2+) is bound by residues aspartate 201, tyrosine 235, leucine 236, and glutamate 238. N-linked (GlcNAc...) asparagine glycosylation is found at asparagine 295, asparagine 310, asparagine 338, asparagine 414, asparagine 445, and asparagine 453. Asparagine 338 contributes to the N-acetyl-beta-D-glucosamine binding site.

It belongs to the glycosyl hydrolase 13 family. Saliva (at protein level). Proximal lateral lobes of the salivary gland (at protein level).

The protein resides in the secreted. It catalyses the reaction Hydrolysis of terminal, non-reducing (1-&gt;4)-linked alpha-D-glucose residues with release of alpha-D-glucose.. Functions as a glucosidase that shows high activity toward sucrose, a major component of nectar. Assists the mosquito in its sugar-feeding capabilities. The protein is Salivary alpha-glucosidase of Anopheles gambiae (African malaria mosquito).